Reading from the N-terminus, the 525-residue chain is G patch domain-containing protein 3 (525 aa).

Positions Tyr-264–Thr-316 are disordered. Residues Glu-275–Glu-298 are compositionally biased toward acidic residues. Over residues Glu-299–Thr-316 the composition is skewed to basic and acidic residues. The region spanning Thr-410–Glu-458 is the G-patch domain.

As to quaternary structure, interacts with mitochondrial MAVS; the interaction is markedly increased upon viral infection. In terms of tissue distribution, expressed in ocular tissues including retinal pigment epithelium, cornea, ciliary muscle and non-pigmented ciliary epithelium. Also expressed in optic nerve, cartilage, skin and lymph node.

Its subcellular location is the nucleus. The protein resides in the cytoplasm. Its function is as follows. Involved in transcriptional regulation. It is able to activate transcription from the CXCR4 promoter and therefore it might control neural crest cell migration involved in ocular and craniofacial development. Is a negative regulator of immune antiviral response, acting via down-regulation of RIG-I-like receptors signaling and inhibition of type I interferon production. The control mechanism involves interaction with mitochondrial MAVS and inhibition of MAVS assembly with downstream proteins implicated in antiviral response, such as TBK1 and TRAF6. The polypeptide is G patch domain-containing protein 3 (GPATCH3) (Homo sapiens (Human)).